A 271-amino-acid polypeptide reads, in one-letter code: Tryptophan synthase alpha chain (271 aa).

Residues Glu-49 and Asp-60 each act as proton acceptor in the active site.

Belongs to the TrpA family. As to quaternary structure, tetramer of two alpha and two beta chains.

It carries out the reaction (1S,2R)-1-C-(indol-3-yl)glycerol 3-phosphate + L-serine = D-glyceraldehyde 3-phosphate + L-tryptophan + H2O. Its pathway is amino-acid biosynthesis; L-tryptophan biosynthesis; L-tryptophan from chorismate: step 5/5. In terms of biological role, the alpha subunit is responsible for the aldol cleavage of indoleglycerol phosphate to indole and glyceraldehyde 3-phosphate. The protein is Tryptophan synthase alpha chain of Yersinia pestis bv. Antiqua (strain Angola).